We begin with the raw amino-acid sequence, 187 residues long: Elongation factor P (187 aa).

It belongs to the elongation factor P family.

It is found in the cytoplasm. The protein operates within protein biosynthesis; polypeptide chain elongation. Involved in peptide bond synthesis. Stimulates efficient translation and peptide-bond synthesis on native or reconstituted 70S ribosomes in vitro. Probably functions indirectly by altering the affinity of the ribosome for aminoacyl-tRNA, thus increasing their reactivity as acceptors for peptidyl transferase. The polypeptide is Elongation factor P (efp) (Helicobacter pylori (strain J99 / ATCC 700824) (Campylobacter pylori J99)).